Consider the following 357-residue polypeptide: RNA 3'-terminal phosphate cyclase (357 aa).

ATP-binding positions include Gln102 and 293-296 (HMGD). Catalysis depends on His319, which acts as the Tele-AMP-histidine intermediate.

The protein belongs to the RNA 3'-terminal cyclase family. Type 1 subfamily.

It localises to the cytoplasm. The catalysed reaction is a 3'-end 3'-phospho-ribonucleotide-RNA + ATP = a 3'-end 2',3'-cyclophospho-ribonucleotide-RNA + AMP + diphosphate. Functionally, catalyzes the conversion of 3'-phosphate to a 2',3'-cyclic phosphodiester at the end of RNA. The mechanism of action of the enzyme occurs in 3 steps: (A) adenylation of the enzyme by ATP; (B) transfer of adenylate to an RNA-N3'P to produce RNA-N3'PP5'A; (C) and attack of the adjacent 2'-hydroxyl on the 3'-phosphorus in the diester linkage to produce the cyclic end product. The biological role of this enzyme is unknown but it is likely to function in some aspects of cellular RNA processing. The sequence is that of RNA 3'-terminal phosphate cyclase from Staphylothermus marinus (strain ATCC 43588 / DSM 3639 / JCM 9404 / F1).